The sequence spans 154 residues: MSNSVELSSYRDQHFKGSRSEQERSLKESCTLYVGNLSFYTTEEQIHELFSRCGDVRLIVMGLDKYKKTPCGFCFVEYYTRSEAESAMRFVNGTRLDDRLIRVDWDAGFIEGRQYGRGKTGGQVRDEYRTDYDAGRGGYGKLLSQKIAPNTDNR.

MRNA is bound by residues Tyr-10, Tyr-33, 102–106 (RVDWD), 113–117 (RQYGR), and 123–124 (QV). Positions 30–108 (CTLYVGNLSF…RLIRVDWDAG (79 aa)) constitute an RRM domain.

Belongs to the RRM NCBP2 family. Component of the nuclear cap-binding complex (CBC), a heterodimer composed of Cbp80 and Cbp20 that interacts with m7GpppG-capped RNA. Interacts with Ars2.

It localises to the nucleus. Component of the cap-binding complex (CBC), which binds co-transcriptionally to the 5' cap of pre-mRNAs and is involved in various processes such as pre-mRNA splicing and RNA-mediated gene silencing (RNAi). The CBC complex is involved in miRNA-mediated RNA interference via its interaction with Ars2 and is required for primary microRNAs (miRNAs) processing. Also involved in innate immunity via the short interfering RNAs (siRNAs) processing machinery by restricting the viral RNA production. In the CBC complex, Cbp20 recognizes and binds capped RNAs (m7GpppG-capped RNA) but requires Cbp80 to stabilize the movement of its N-terminal loop and lock the CBC into a high affinity cap-binding state with the cap structure. In Drosophila willistoni (Fruit fly), this protein is Nuclear cap-binding protein subunit 2 (Cbp20).